Here is a 119-residue protein sequence, read N- to C-terminus: Large ribosomal subunit protein bL20 (119 aa).

It belongs to the bacterial ribosomal protein bL20 family.

Its function is as follows. Binds directly to 23S ribosomal RNA and is necessary for the in vitro assembly process of the 50S ribosomal subunit. It is not involved in the protein synthesizing functions of that subunit. The protein is Large ribosomal subunit protein bL20 of Clostridium novyi (strain NT).